The sequence spans 294 residues: Cytidine deaminase (294 aa).

2 CMP/dCMP-type deaminase domains span residues 48-168 and 187-294; these read DDDA…FGPT and AETD…RVTF. A substrate-binding site is contributed by 89–91; the sequence is NME. Position 102 (histidine 102) interacts with Zn(2+). Residue glutamate 104 is the Proton donor of the active site. Zn(2+)-binding residues include cysteine 129 and cysteine 132.

Belongs to the cytidine and deoxycytidylate deaminase family. In terms of assembly, homodimer. It depends on Zn(2+) as a cofactor.

It catalyses the reaction cytidine + H2O + H(+) = uridine + NH4(+). It carries out the reaction 2'-deoxycytidine + H2O + H(+) = 2'-deoxyuridine + NH4(+). This enzyme scavenges exogenous and endogenous cytidine and 2'-deoxycytidine for UMP synthesis. This is Cytidine deaminase from Yersinia pseudotuberculosis serotype O:1b (strain IP 31758).